The chain runs to 2531 residues: MPRLLTPLLCLTLLPALAARGLRCSQPSGTCLNGGRCEVANGTEACVCSGAFVGQRCQDSNPCLSTPCKNAGTCHVVDHGGTVDYACSCPLGFSGPLCLTPLDNACLANPCRNGGTCDLLTLTEYKCRCPPGWSGKSCQQADPCASNPCANGGQCLPFESSYICRCPPGFHGPTCRQDVNECSQNPGLCRHGGTCHNEIGSYRCACRATHTGPHCELPYVPCSPSPCQNGGTCRPTGDTTHECACLPGFAGQNCEENVDDCPGNNCKNGGACVDGVNTYNCRCPPEWTGQYCTEDVDECQLMPNACQNGGTCHNTHGGYNCVCVNGWTGEDCSENIDDCASAACFQGATCHDRVASFYCECPHGRTGLLCHLNDACISNPCNEGSNCDTNPVNGKAICTCPSGYTGPACSQDVDECALGANPCEHAGKCLNTLGSFECQCLQGYTGPRCEIDVNECISNPCQNDATCLDQIGEFQCICMPGYEGVYCEINTDECASSPCLHNGHCMDKINEFQCQCPKGFNGHLCQYDVDECASTPCKNGAKCLDGPNTYTCVCTEGYTGTHCEVDIDECDPDPCHYGSCKDGVATFTCLCQPGYTGHHCETNINECHSQPCRHGGTCQDRDNSYLCLCLKGTTGPNCEINLDDCASNPCDSGTCLDKIDGYECACEPGYTGSMCNVNIDECAGSPCHNGGTCEDGIAGFTCRCPEGYHDPTCLSEVNECNSNPCIHGACRDGLNGYKCDCAPGWSGTNCDINNNECESNPCVNGGTCKDMTSGYVCTCREGFSGPNCQTNINECASNPCLNQGTCIDDVAGYKCNCPLPYTGATCEVVLAPCATSPCKNSGVCKESEDYESFSCVCPTGWQGQTCEVDINECVKSPCRHGASCQNTNGSYRCLCQAGYTGRNCESDIDDCRPNPCHNGGSCTDGINTAFCDCLPGFQGAFCEEDINECASNPCQNGANCTDCVDSYTCTCPVGFNGIHCENNTPDCTESSCFNGGTCVDGINSFTCLCPPGFTGSYCQYDVNECDSRPCLHGGTCQDSYGTYKCTCPQGYTGLNCQNLVRWCDSAPCKNGGRCWQTNTQYHCECRSGWTGVNCDVLSVSCEVAAQKRGIDVTLLCQHGGLCVDEGDKHYCHCQAGYTGSYCEDEVDECSPNPCQNGATCTDYLGGFSCKCVAGYHGSNCSEEINECLSQPCQNGGTCIDLTNSYKCSCPRGTQGVHCEINVDDCHPPLDPASRSPKCFNNGTCVDQVGGYTCTCPPGFVGERCEGDVNECLSNPCDPRGTQNCVQRVNDFHCECRAGHTGRRCESVINGCRGKPCKNGGVCAVASNTARGFICRCPAGFEGATCENDARTCGSLRCLNGGTCISGPRSPTCLCLGSFTGPECQFPASSPCVGSNPCYNQGTCEPTSENPFYRCLCPAKFNGLLCHILDYSFTGGAGRDIPPPQIEEACELPECQVDAGNKVCNLQCNNHACGWDGGDCSLNFNDPWKNCTQSLQCWKYFSDGHCDSQCNSAGCLFDGFDCQLTEGQCNPLYDQYCKDHFSDGHCDQGCNSAECEWDGLDCAEHVPERLAAGTLVLVVLLPPDQLRNNSFHFLRELSHVLHTNVVFKRDAQGQQMIFPYYGHEEELRKHPIKRSTVGWATSSLLPGTSGGRQRRELDPMDIRGSIVYLEIDNRQCVQSSSQCFQSATDVAAFLGALASLGSLNIPYKIEAVKSEPVEPPLPSQLHLMYVAAAAFVLLFFVGCGVLLSRKRRRQHGQLWFPEGFKVSEASKKKRREPLGEDSVGLKPLKNASDGALMDDNQNEWGDEDLETKKFRFEEPVVLPDLSDQTDHRQWTQQHLDAADLRMSAMAPTPPQGEVDADCMDVNVRGPDGFTPLMIASCSGGGLETGNSEEEEDAPAVISDFIYQGASLHNQTDRTGETALHLAARYSRSDAAKRLLEASADANIQDNMGRTPLHAAVSADAQGVFQILLRNRATDLDARMHDGTTPLILAARLAVEGMLEDLINSHADVNAVDDLGKSALHWAAAVNNVDAAVVLLKNGANKDMQNNKEETPLFLAAREGSYETAKVLLDHFANRDITDHMDRLPRDIAQERMHHDIVRLLDEYNLVRSPQLHGTALGGTPTLSPTLCSPNGYLGNLKSATQGKKARKPSTKGLACGSKEAKDLKARRKKSQDGKGCLLDSSSMLSPVDSLESPHGYLSDVASPPLLPSPFQQSPSMPLSHLPGMPDTHLGISHLNVAAKPEMAALAGGSRLAFEPPPPRLSHLPVASSASTVLSTNGTGAMNFTVGAPASLNGQCEWLPRLQNGMVPSQYNPLRPGVTPGTLSTQAAGLQHSMMGPLHSSLSTNTLSPIIYQGLPNTRLATQPHLVQTQQVQPQNLQLQPQNLQPPSQPHLSVSSAANGHLGRSFLSGEPSQADVQPLGPSSLPVHTILPQESQALPTSLPSSMVPPMTTTQFLTPPSQHSYSSSPVDNTPSHQLQVPEHPFLTPSPESPDQWSSSSPHSNISDWSEGISSPPTTMPSQITHIPEAFK.

A signal peptide spans 1 to 18; the sequence is MPRLLTPLLCLTLLPALA. The Extracellular portion of the chain corresponds to 19–1725; it reads ARGLRCSQPS…VEPPLPSQLH (1707 aa). 4 EGF-like domains span residues 20–58, 59–99, 102–139, and 140–176; these read RGLR…QRCQ, DSNP…PLCL, LDNA…KSCQ, and QADP…PTCR. 32 cysteine pairs are disulfide-bonded: C24/C37, C31/C46, C63/C74, C68/C87, C89/C98, C106/C117, C111/C127, C129/C138, C144/C155, C149/C164, C166/C175, C182/C195, C189/C204, C206/C215, C222/C233, C227/C243, C245/C254, C261/C272, C266/C281, C283/C292, C299/C312, C306/C321, C323/C332, C339/C350, C344/C359, C361/C370, C376/C387, C381/C398, C400/C409, C416/C429, C423/C438, and C440/C449. Residue S65 is glycosylated (O-linked (Glc...) serine). T73 carries O-linked (Fuc...) threonine glycosylation. Residue T116 is glycosylated (O-linked (Fuc...) threonine). An O-linked (Glc...) serine glycan is attached at S146. One can recognise an EGF-like 5; calcium-binding domain in the interval 178-216; it reads DVNECSQNPGLCRHGGTCHNEIGSYRCACRATHTGPHCE. A glycan (O-linked (Fuc...) threonine) is linked at T194. The 38-residue stretch at 218 to 255 folds into the EGF-like 6 domain; that stretch reads PYVPCSPSPCQNGGTCRPTGDTTHECACLPGFAGQNCE. O-linked (Fuc...) threonine; alternate glycosylation occurs at T232. O-linked (GalNAc...) threonine; alternate glycosylation occurs at T232. The region spanning 257-293 is the EGF-like 7; calcium-binding domain; sequence NVDDCPGNNCKNGGACVDGVNTYNCRCPPEWTGQYCT. Residues 295-333 enclose the EGF-like 8; calcium-binding domain; sequence DVDECQLMPNACQNGGTCHNTHGGYNCVCVNGWTGEDCS. O-linked (Fuc...) threonine glycosylation occurs at T311. The EGF-like 9; calcium-binding domain occupies 335 to 371; the sequence is NIDDCASAACFQGATCHDRVASFYCECPHGRTGLLCH. Residue S341 is glycosylated (O-linked (Glc...) serine). O-linked (Fuc...) threonine glycosylation is present at T349. The EGF-like 10; calcium-binding domain occupies 372-410; the sequence is LNDACISNPCNEGSNCDTNPVNGKAICTCPSGYTGPACS. O-linked (Glc...) serine glycosylation is present at S378. Residues 412 to 450 enclose the EGF-like 11; calcium-binding domain; the sequence is DVDECALGANPCEHAGKCLNTLGSFECQCLQGYTGPRCE. The tract at residues 420–421 is interaction with DLL4; it reads AN. T432 and S435 together coordinate Ca(2+). A glycan (O-linked (Glc...) serine) is linked at S435. The segment at 448 to 452 is interaction with DLL4; it reads RCEID. Ca(2+) contacts are provided by D452, V453, and E455. The EGF-like 12; calcium-binding domain occupies 452 to 488; the sequence is DVNECISNPCQNDATCLDQIGEFQCICMPGYEGVYCE. Intrachain disulfides connect C456–C467, C461–C476, and C478–C487. O-linked (Glc...) serine glycosylation occurs at S458. T466 carries O-linked (Fuc...) threonine glycosylation. Ca(2+) contacts are provided by D469 and Q470. Positions 490, 491, and 493 each coordinate Ca(2+). An EGF-like 13; calcium-binding domain is found at 490–526; the sequence is NTDECASSPCLHNGHCMDKINEFQCQCPKGFNGHLCQ. Cystine bridges form between C494–C505, C499–C514, C516–C525, C532–C543, C537–C552, C554–C563, C570–C580, C575–C589, C591–C600, C607–C618, C612–C627, C629–C638, C645–C655, C650–C664, C666–C675, C682–C693, C687–C702, C704–C713, C720–C730, C725–C739, C741–C750, C757–C768, C762–C777, C779–C788, C795–C806, C800–C815, C817–C826, C833–C844, C838–C855, C857–C866, C873–C884, C878–C893, C895–C904, C911–C922, C916–C931, C933–C942, C949–C960, C954–C969, C971–C980, C987–C998, C992–C1007, C1009–C1018, C1025–C1036, C1030–C1045, C1047–C1056, C1063–C1074, C1068–C1083, C1085–C1094, C1101–C1122, C1116–C1131, C1133–C1142, C1149–C1160, C1154–C1169, C1171–C1180, C1187–C1198, C1192–C1207, C1209–C1218, C1225–C1244, C1238–C1253, C1255–C1264, C1271–C1284, C1276–C1293, C1295–C1304, C1311–C1322, C1316–C1334, C1336–C1345, C1352–C1363, C1357–C1372, C1374–C1383, C1391–C1403, C1397–C1414, C1416–C1425, C1449–C1472, C1454–C1467, and C1463–C1479. Residue S496 is glycosylated (O-linked (Glc...) serine). Positions 507 and 508 each coordinate Ca(2+). Residues 528–564 enclose the EGF-like 14; calcium-binding domain; sequence DVDECASTPCKNGAKCLDGPNTYTCVCTEGYTGTHCE. O-linked (Glc...) serine glycosylation is present at S534. In terms of domain architecture, EGF-like 15; calcium-binding spans 566–601; the sequence is DIDECDPDPCHYGSCKDGVATFTCLCQPGYTGHHCE. The EGF-like 16; calcium-binding domain maps to 603–639; sequence NINECHSQPCRHGGTCQDRDNSYLCLCLKGTTGPNCE. S609 carries O-linked (Glc...) serine glycosylation. The O-linked (Fuc...) threonine glycan is linked to T617. In terms of domain architecture, EGF-like 17; calcium-binding spans 641–676; it reads NLDDCASNPCDSGTCLDKIDGYECACEPGYTGSMCN. O-linked (Glc...) serine glycosylation is present at S647. In terms of domain architecture, EGF-like 18; calcium-binding spans 678–714; that stretch reads NIDECAGSPCHNGGTCEDGIAGFTCRCPEGYHDPTCL. T692 carries an O-linked (Fuc...) threonine glycan. The EGF-like 19; calcium-binding domain occupies 716-751; sequence EVNECNSNPCIHGACRDGLNGYKCDCAPGWSGTNCD. O-linked (Glc...) serine glycosylation occurs at S722. In terms of domain architecture, EGF-like 20; calcium-binding spans 753–789; sequence NNNECESNPCVNGGTCKDMTSGYVCTCREGFSGPNCQ. S759 carries O-linked (Glc...) serine glycosylation. T767 is a glycosylation site (O-linked (Fuc...) threonine). O-linked (GlcNAc) serine glycosylation occurs at S784. The EGF-like 21; calcium-binding domain occupies 791 to 827; it reads NINECASNPCLNQGTCIDDVAGYKCNCPLPYTGATCE. S797 is a glycosylation site (O-linked (Glc...) serine). O-linked (Fuc...) threonine glycosylation is present at T805. In terms of domain architecture, EGF-like 22 spans 829-867; it reads VLAPCATSPCKNSGVCKESEDYESFSCVCPTGWQGQTCE. An EGF-like 23; calcium-binding domain is found at 869–905; sequence DINECVKSPCRHGASCQNTNGSYRCLCQAGYTGRNCE. N-linked (GlcNAc...) asparagine glycosylation is present at N888. O-linked (GlcNAc) threonine glycosylation is present at T900. Residues 907-943 form the EGF-like 24 domain; sequence DIDDCRPNPCHNGGSCTDGINTAFCDCLPGFQGAFCE. O-linked (Fuc) serine glycosylation is present at S921. The EGF-like 25; calcium-binding domain maps to 945 to 981; that stretch reads DINECASNPCQNGANCTDCVDSYTCTCPVGFNGIHCE. Residue S951 is glycosylated (O-linked (Glc...) serine). N959 carries an N-linked (GlcNAc...) asparagine glycan. The 37-residue stretch at 983–1019 folds into the EGF-like 26 domain; sequence NTPDCTESSCFNGGTCVDGINSFTCLCPPGFTGSYCQ. Residue T997 is glycosylated (O-linked (Fuc...) threonine). The 37-residue stretch at 1021–1057 folds into the EGF-like 27; calcium-binding domain; it reads DVNECDSRPCLHGGTCQDSYGTYKCTCPQGYTGLNCQ. The O-linked (Glc...) serine glycan is linked to S1027. An O-linked (Fuc...) threonine glycan is attached at T1035. 2 EGF-like domains span residues 1059-1095 and 1097-1143; these read LVRW…VNCD and LSVS…SYCE. The O-linked (Glc...) serine glycan is linked to S1065. Residues 1145-1181 enclose the EGF-like 30; calcium-binding domain; that stretch reads EVDECSPNPCQNGATCTDYLGGFSCKCVAGYHGSNCS. T1159 carries an O-linked (Fuc...) threonine glycan. N-linked (GlcNAc...) asparagine glycosylation occurs at N1179. An EGF-like 31; calcium-binding domain is found at 1183-1219; sequence EINECLSQPCQNGGTCIDLTNSYKCSCPRGTQGVHCE. Residue S1189 is glycosylated (O-linked (Glc...) serine). T1197 is a glycosylation site (O-linked (Fuc...) threonine). One can recognise an EGF-like 32; calcium-binding domain in the interval 1221–1265; sequence NVDDCHPPLDPASRSPKCFNNGTCVDQVGGYTCTCPPGFVGERCE. A glycan (N-linked (GlcNAc...) asparagine) is linked at N1241. EGF-like domains lie at 1267-1305, 1307-1346, 1348-1384, and 1387-1426; these read DVNE…RRCE, VING…ATCE, DART…PECQ, and ASSP…LLCH. O-linked (Glc...) serine glycosylation occurs at S1273. An O-linked (Fuc...) threonine glycan is attached at T1362. A glycan (O-linked (GlcNAc...) threonine) is linked at T1379. T1402 carries O-linked (Fuc...) threonine; alternate glycosylation. Residue T1402 is glycosylated (O-linked (GalNAc...) threonine; alternate). LNR repeat units follow at residues 1449–1489, 1490–1531, and 1532–1571; these read CELP…PWKN, CTQS…CNPL, and YDQY…RLAA. D1457, N1460, D1475, and D1478 together coordinate Ca(2+). The N-linked (GlcNAc...) asparagine glycan is linked to N1489. 5 cysteine pairs are disulfide-bonded: C1490/C1514, C1496/C1509, C1505/C1521, C1536/C1549, and C1545/C1561. The N-linked (GlcNAc...) asparagine glycan is linked to N1587. Residues 1718–1750 form an interaction with PSEN1 region; that stretch reads PPLPSQLHLMYVAAAAFVLLFFVGCGVLLSRKR. Residues 1726–1746 form a helical membrane-spanning segment; sequence LMYVAAAAFVLLFFVGCGVLL. Residues 1747–2531 lie on the Cytoplasmic side of the membrane; the sequence is SRKRRRQHGQ…QITHIPEAFK (785 aa). Residue K1749 forms a Glycyl lysine isopeptide (Lys-Gly) (interchain with G-Cter in ubiquitin) linkage. The interval 1770–1798 is disordered; the sequence is KKKRREPLGEDSVGLKPLKNASDGALMDD. T1851 bears the Phosphothreonine mark. 5 ANK repeats span residues 1917–1946, 1950–1980, 1984–2013, 2017–2046, and 2050–2079; these read TGET…DANI, MGRT…DLDA, DGTT…DVNA, LGKS…NKDM, and KEET…NRDI. The HIF1AN-binding stretch occupies residues 1937–1945; it reads LLEASADAN. At N1945 the chain carries (3S)-3-hydroxyasparagine; by HIF1AN; partial. The segment at 2004 to 2012 is HIF1AN-binding; sequence LINSHADVN. N2012 carries the post-translational modification (3S)-3-hydroxyasparagine; by HIF1AN; partial. 3 disordered regions span residues 2140-2185, 2382-2428, and 2440-2531; these read KSAT…DSSS, QPQN…SLPV, and PTSL…EAFK. Over residues 2382–2395 the composition is skewed to low complexity; sequence QPQNLQPPSQPHLS. Residues 2440–2478 show a composition bias toward polar residues; the sequence is PTSLPSSMVPPMTTTQFLTPPSQHSYSSSPVDNTPSHQL. The segment covering 2488–2503 has biased composition (low complexity); that stretch reads PSPESPDQWSSSSPHS. The span at 2504–2524 shows a compositional bias: polar residues; sequence NISDWSEGISSPPTTMPSQIT.

This sequence belongs to the NOTCH family. As to quaternary structure, heterodimer of a C-terminal fragment N(TM) and an N-terminal fragment N(EC) which are probably linked by disulfide bonds. Interacts with DNER, DTX1, DTX2 and RBPJ/RBPSUH. Also interacts with MAML1, MAML2 and MAML3 which act as transcriptional coactivators for NOTCH1. Notch 1 intracellular domain interacts with SNW1; the interaction involves multimerized NOTCH1 NICD and is implicated in a formation of an intermediate preactivation complex which associates with DNA-bound CBF-1/RBPJ. The activated membrane-bound form interacts with AAK1 which promotes NOTCH1 stabilization. Forms a trimeric complex with FBXW7 and SGK1. Interacts with HIF1AN. HIF1AN negatively regulates the function of notch intracellular domain (NICD), accelerating myogenic differentiation. Interacts (via NICD) with SNAI1 (via zinc fingers); the interaction induces SNAI1 degradation via MDM2-mediated ubiquitination and inhibits SNAI1-induced cell invasion. Interacts (via NICD) with MDM2A. Interacts (via NICD) with BCL6; the interaction decreases MAML1 recruitment by NOTCH1 NICD on target genes DNA and inhibits NOTCH1 transactivation activity. Interacts with THBS4. Interacts (via the EGF-like repeat region) with CCN3 (via CTCK domain). Interacts (via EGF-like domains) with DLL4 (via N-terminal DSL and MNNL domains). Interacts with ZMIZ1. Interacts (via NICD domain) with MEGF10 (via the cytoplasmic domain). Interacts with DLL1 and JAG1. Interacts (via NICD domain) with PRAG1. Forms a complex with PRAG1, N1ICD and MAML1, in a MAML1-dependent manner. Interacts (via transmembrane region) with PSEN1; the interaction is direct. Interacts with ZFP64. Post-translationally, synthesized in the endoplasmic reticulum as an inactive form which is proteolytically cleaved by a furin-like convertase in the trans-Golgi network before it reaches the plasma membrane to yield an active, ligand-accessible form. Cleavage results in a C-terminal fragment N(TM) and a N-terminal fragment N(EC). Following ligand binding, it is cleaved by ADAM17 to yield a membrane-associated intermediate fragment called notch extracellular truncation (NEXT). Following endocytosis, this fragment is then cleaved by one of the catalytic subunits of gamma-secretase (PSEN1 or PSEN2) to release a Notch-derived peptide containing the intracellular domain (NICD) from the membrane. Phosphorylated. In terms of processing, O-linked glycosylation by GALNT11 is involved in determination of left/right symmetry: glycosylation promotes activation of NOTCH1, possibly by promoting cleavage by ADAM17, modulating the balance between motile and immotile (sensory) cilia at the left-right organiser (LRO). O-glycosylated on the EGF-like domains. O-glucosylated at Ser-435 by KDELC1 and KDELC2. Contains both O-linked fucose and O-linked glucose in the EGF-like domains 11, 12 and 13, which are interacting with the residues on DLL4. O-glycosylation at Ser-1027 is only partial. MFNG-, RFNG- and LFNG-mediated modification of O-fucose residues at specific EGF-like domains results in inhibition of its activation by JAG1 and enhancement of its activation by DLL1 via an increased binding to DLL1. Post-translationally, ubiquitinated. Undergoes 'Lys-29'-linked polyubiquitination by ITCH; promotes the lysosomal degradation of non-activated internalized NOTCH1. Deubiquitination by USP12 is required for transport of internalized non-activated receptor from late endosomes to lysosomes for degradation. Monoubiquitination at Lys-1749 is required for activation by gamma-secretase cleavage, it promotes interaction with AAK1, which stabilizes it. Deubiquitination by EIF3F is necessary for nuclear import of activated Notch. Hydroxylated at Asn-1945 and Asn-2012 by HIF1AN. Hydroxylation reduces affinity for HI1AN and may thus indirectly modulate negative regulation of NICD. As to expression, highly expressed in the brain, lung and thymus. Expressed at lower levels in the spleen, bone-marrow, spinal cord, eyes, mammary gland, liver, intestine, skeletal muscle, kidney and heart. In the hair follicle, highly expressed exclusively in the epithelial compartment.

The protein resides in the cell membrane. It is found in the late endosome membrane. Its subcellular location is the nucleus. Functionally, functions as a receptor for membrane-bound ligands Jagged-1 (JAG1), Jagged-2 (JAG2) and Delta-1 (DLL1) to regulate cell-fate determination. Upon ligand activation through the released notch intracellular domain (NICD) it forms a transcriptional activator complex with RBPJ/RBPSUH and activates genes of the enhancer of split locus. Affects the implementation of differentiation, proliferation and apoptotic programs. Involved in angiogenesis; negatively regulates endothelial cell proliferation and migration and angiogenic sprouting. Involved in the maturation of both CD4(+) and CD8(+) cells in the thymus. Important for follicular differentiation and possibly cell fate selection within the follicle. During cerebellar development, functions as a receptor for neuronal DNER and is involved in the differentiation of Bergmann glia. Represses neuronal and myogenic differentiation. May play an essential role in postimplantation development, probably in some aspect of cell specification and/or differentiation. May be involved in mesoderm development, somite formation and neurogenesis. May enhance HIF1A function by sequestering HIF1AN away from HIF1A. Required for the THBS4 function in regulating protective astrogenesis from the subventricular zone (SVZ) niche after injury. Involved in determination of left/right symmetry by modulating the balance between motile and immotile (sensory) cilia at the left-right organiser (LRO). This Mus musculus (Mouse) protein is Neurogenic locus notch homolog protein 1 (Notch1).